The primary structure comprises 468 residues: Nuclear receptor ROR-alpha A (468 aa).

The nuclear receptor DNA-binding region spans 15–90 (IIPCKICGDK…VGMSRDAVKF (76 aa)). 2 NR C4-type zinc fingers span residues 18 to 38 (CKIC…CEGC) and 54 to 73 (CPRQ…CQHC). 2 disordered regions span residues 101–129 (LYAE…PLTP) and 142–163 (HDDL…DSGV). Residues 217–455 (ELEHLAQNIS…AHFPPLYKEL (239 aa)) enclose the NR LBD domain. An AF-2 region spans residues 444–455 (VRAHFPPLYKEL).

It belongs to the nuclear hormone receptor family. NR1 subfamily. In terms of tissue distribution, expressed in the brain, in cerebellar-like structures, including Purkinje cells.

Its subcellular location is the nucleus. Functionally, nuclear receptor that binds DNA as a monomer to ROR response elements (RORE). Required for proper cerebellum development. This is Nuclear receptor ROR-alpha A (roraa) from Danio rerio (Zebrafish).